A 125-amino-acid polypeptide reads, in one-letter code: Small ribosomal subunit protein uS13 (125 aa).

The segment at 93-125 (RKGLPVRGQRTKTNARTRKGPKRTVAGKKKAGR) is disordered.

Belongs to the universal ribosomal protein uS13 family. In terms of assembly, part of the 30S ribosomal subunit. Forms a loose heterodimer with protein S19. Forms two bridges to the 50S subunit in the 70S ribosome.

Functionally, located at the top of the head of the 30S subunit, it contacts several helices of the 16S rRNA. In the 70S ribosome it contacts the 23S rRNA (bridge B1a) and protein L5 of the 50S subunit (bridge B1b), connecting the 2 subunits; these bridges are implicated in subunit movement. Contacts the tRNAs in the A and P-sites. In Arthrobacter sp. (strain FB24), this protein is Small ribosomal subunit protein uS13.